The sequence spans 431 residues: Adenylosuccinate synthetase (431 aa).

GTP-binding positions include 12–18 (GDEGKGK) and 40–42 (GHT). Aspartate 13 acts as the Proton acceptor in catalysis. Residues aspartate 13 and glycine 40 each contribute to the Mg(2+) site. Residues 13–16 (DEGK), 38–41 (NAGH), threonine 131, arginine 145, glutamine 225, threonine 240, and arginine 304 contribute to the IMP site. Histidine 41 serves as the catalytic Proton donor. A substrate-binding site is contributed by 300–306 (VNTGRPR). GTP is bound by residues arginine 306, 332–334 (KLD), and 414–416 (STS).

It belongs to the adenylosuccinate synthetase family. As to quaternary structure, homodimer. Mg(2+) serves as cofactor.

It is found in the cytoplasm. The enzyme catalyses IMP + L-aspartate + GTP = N(6)-(1,2-dicarboxyethyl)-AMP + GDP + phosphate + 2 H(+). It functions in the pathway purine metabolism; AMP biosynthesis via de novo pathway; AMP from IMP: step 1/2. Its function is as follows. Plays an important role in the de novo pathway of purine nucleotide biosynthesis. Catalyzes the first committed step in the biosynthesis of AMP from IMP. This Rhizobium rhizogenes (strain K84 / ATCC BAA-868) (Agrobacterium radiobacter) protein is Adenylosuccinate synthetase.